Consider the following 81-residue polypeptide: Large ribosomal subunit protein bL31B (81 aa).

This sequence belongs to the bacterial ribosomal protein bL31 family. Type B subfamily. Part of the 50S ribosomal subunit.

In Exiguobacterium sibiricum (strain DSM 17290 / CCUG 55495 / CIP 109462 / JCM 13490 / 255-15), this protein is Large ribosomal subunit protein bL31B.